A 370-amino-acid polypeptide reads, in one-letter code: 3-dehydroquinate synthase (370 aa).

Residues 108 to 112 (GVIGD), 132 to 133 (TT), lysine 145, and lysine 154 each bind NAD(+). Zn(2+)-binding residues include glutamate 187, histidine 249, and histidine 267.

This sequence belongs to the sugar phosphate cyclases superfamily. Dehydroquinate synthase family. Co(2+) serves as cofactor. It depends on Zn(2+) as a cofactor. The cofactor is NAD(+).

Its subcellular location is the cytoplasm. The catalysed reaction is 7-phospho-2-dehydro-3-deoxy-D-arabino-heptonate = 3-dehydroquinate + phosphate. The protein operates within metabolic intermediate biosynthesis; chorismate biosynthesis; chorismate from D-erythrose 4-phosphate and phosphoenolpyruvate: step 2/7. In terms of biological role, catalyzes the conversion of 3-deoxy-D-arabino-heptulosonate 7-phosphate (DAHP) to dehydroquinate (DHQ). The sequence is that of 3-dehydroquinate synthase from Cereibacter sphaeroides (strain ATCC 17023 / DSM 158 / JCM 6121 / CCUG 31486 / LMG 2827 / NBRC 12203 / NCIMB 8253 / ATH 2.4.1.) (Rhodobacter sphaeroides).